The sequence spans 335 residues: tRNA pseudouridine synthase D (335 aa).

The Nucleophile role is filled by Asp-77. A TRUD domain is found at 152–308; it reads GFPNYFTEQR…AQHLSWSFIP (157 aa).

The protein belongs to the pseudouridine synthase TruD family.

It catalyses the reaction uridine(13) in tRNA = pseudouridine(13) in tRNA. Its function is as follows. Responsible for synthesis of pseudouridine from uracil-13 in transfer RNAs. In Histophilus somni (strain 129Pt) (Haemophilus somnus), this protein is tRNA pseudouridine synthase D.